We begin with the raw amino-acid sequence, 288 residues long: Pantothenate synthetase (288 aa).

27-34 (MGALHEGH) lines the ATP pocket. The Proton donor role is filled by His34. 2 residues coordinate (R)-pantoate: Gln58 and Gln150. Residue Gln58 coordinates beta-alanine. ATP is bound by residues Leu173 and 181–184 (YSSR).

Belongs to the pantothenate synthetase family. As to quaternary structure, homodimer.

The protein localises to the cytoplasm. The enzyme catalyses (R)-pantoate + beta-alanine + ATP = (R)-pantothenate + AMP + diphosphate + H(+). It functions in the pathway cofactor biosynthesis; (R)-pantothenate biosynthesis; (R)-pantothenate from (R)-pantoate and beta-alanine: step 1/1. Catalyzes the condensation of pantoate with beta-alanine in an ATP-dependent reaction via a pantoyl-adenylate intermediate. The protein is Pantothenate synthetase of Tropheryma whipplei (strain TW08/27) (Whipple's bacillus).